We begin with the raw amino-acid sequence, 290 residues long: Fructose-1,6-bisphosphatase class 1 (290 aa).

Glutamate 78, aspartate 96, leucine 98, and aspartate 99 together coordinate Mg(2+). Substrate-binding positions include aspartate 99–serine 102, tyrosine 201, and lysine 226. Mg(2+) is bound at residue glutamate 232.

Belongs to the FBPase class 1 family. As to quaternary structure, homotetramer. The cofactor is Mg(2+).

Its subcellular location is the cytoplasm. It carries out the reaction beta-D-fructose 1,6-bisphosphate + H2O = beta-D-fructose 6-phosphate + phosphate. Its pathway is carbohydrate biosynthesis; gluconeogenesis. The chain is Fructose-1,6-bisphosphatase class 1 from Helicobacter pylori (strain J99 / ATCC 700824) (Campylobacter pylori J99).